The chain runs to 432 residues: UDP-N-acetylglucosamine 1-carboxyvinyltransferase (432 aa).

22 to 23 (KN) is a binding site for phosphoenolpyruvate. Arginine 101 serves as a coordination point for UDP-N-acetyl-alpha-D-glucosamine. Cysteine 125 (proton donor) is an active-site residue. Cysteine 125 is modified (2-(S-cysteinyl)pyruvic acid O-phosphothioketal). UDP-N-acetyl-alpha-D-glucosamine is bound by residues 130 to 134 (RPVDL), aspartate 315, and isoleucine 337.

The protein belongs to the EPSP synthase family. MurA subfamily.

The protein localises to the cytoplasm. The catalysed reaction is phosphoenolpyruvate + UDP-N-acetyl-alpha-D-glucosamine = UDP-N-acetyl-3-O-(1-carboxyvinyl)-alpha-D-glucosamine + phosphate. Its pathway is cell wall biogenesis; peptidoglycan biosynthesis. Functionally, cell wall formation. Adds enolpyruvyl to UDP-N-acetylglucosamine. The sequence is that of UDP-N-acetylglucosamine 1-carboxyvinyltransferase from Paramagnetospirillum magneticum (strain ATCC 700264 / AMB-1) (Magnetospirillum magneticum).